Here is a 616-residue protein sequence, read N- to C-terminus: Secretogranin-2 (616 aa).

Residues Met-1–Ala-27 form the signal peptide. A propeptide spanning residues Ala-28–Phe-30 is cleaved from the precursor. Disordered regions lie at residues Gln-68–Leu-104 and Ala-120–Met-146. Basic and acidic residues predominate over residues Glu-92–Leu-104. Residues Asn-122–Lys-140 show a composition bias toward polar residues. Sulfotyrosine is present on Tyr-150. Ser-173, Ser-267, Ser-431, Ser-531, Ser-554, and Ser-555 each carry phosphoserine. The segment covering Lys-255–Arg-283 has biased composition (basic and acidic residues). Residues Lys-255–Gln-290 form a disordered region. Over residues Glu-548 to Lys-560 the composition is skewed to basic and acidic residues. The tract at residues Glu-548–Gln-582 is disordered.

The protein belongs to the chromogranin/secretogranin protein family. Interacts with Secretogranin III/SCG3.

It is found in the secreted. In terms of biological role, neuroendocrine protein of the granin family that regulates the biogenesis of secretory granules. The sequence is that of Secretogranin-2 (SCG2) from Sus scrofa (Pig).